Consider the following 187-residue polypeptide: Coiled-coil domain-containing protein 201 (187 aa).

Disordered regions lie at residues 1-79 (MEPG…PPAT) and 92-159 (KESS…RAAA). The stretch at 111 to 131 (LTQRQRQRQQQQQQQESLRAK) forms a coiled coil. The segment covering 147–157 (GRKRRDPKKRA) has biased composition (basic residues).

The polypeptide is Coiled-coil domain-containing protein 201 (Homo sapiens (Human)).